Reading from the N-terminus, the 137-residue chain is NADH dehydrogenase [ubiquinone] 1 beta subcomplex subunit 7 (137 aa).

Gly2 is lipidated: N-myristoyl glycine. The CHCH domain occupies 56–98 (RDYCAHYLIRLLKCKRDSFPNFLACKQERHDWDYCEHRDYVMR). The Cx9C motif 1 motif lies at 59 to 69 (CAHYLIRLLKC). 2 disulfides stabilise this stretch: Cys59/Cys90 and Cys69/Cys80. A Phosphoserine modification is found at Ser73. The Cx9C motif 2 signature appears at 80–90 (CKQERHDWDYC). The tract at residues 113-137 (KRREKKAAELAKGQGPGEVDPKVAL) is disordered.

Belongs to the complex I NDUFB7 subunit family. Complex I is composed of 45 different subunits.

It is found in the mitochondrion inner membrane. Its subcellular location is the mitochondrion intermembrane space. Functionally, accessory subunit of the mitochondrial membrane respiratory chain NADH dehydrogenase (Complex I), that is believed not to be involved in catalysis. Complex I functions in the transfer of electrons from NADH to the respiratory chain. The immediate electron acceptor for the enzyme is believed to be ubiquinone. The protein is NADH dehydrogenase [ubiquinone] 1 beta subcomplex subunit 7 (NDUFB7) of Gorilla gorilla gorilla (Western lowland gorilla).